Consider the following 274-residue polypeptide: Protein YehF (274 aa).

Residues 2 to 78 enclose the WGR domain; the sequence is RHFIYQDEKS…KDNSLQPSQT (77 aa).

Its function is as follows. Has been implicated in selenate reduction; a mini-Tn10 insertion mutant in 'molR', (which was mapped to 47.3 centisomes i.e. this locus), is defective in the reduction of selenate. The chain is Protein YehF (yehF) from Escherichia coli (strain K12).